Here is a 496-residue protein sequence, read N- to C-terminus: N-acetylmuramoyl-L-alanine amidase LytC (496 aa).

The first 24 residues, 1 to 24 (MRSYIKVLTMCFLGLILFVPTALA), serve as a signal peptide directing secretion. 3 tandem repeats follow at residues 30–128 (RVGG…ISIK), 129–222 (RIAG…PSPT), and 223–318 (RISG…NPVV). Residues 30 to 318 (RVGGSNRYGT…VANQLKNPVV (289 aa)) form a 3 X tandem repeats region. The 169-residue stretch at 322–490 (IFIDPGHGDQ…DKAAQAIHDG (169 aa)) folds into the MurNAc-LAA domain.

It belongs to the N-acetylmuramoyl-L-alanine amidase 3 family.

The protein resides in the secreted. Its subcellular location is the cell wall. It catalyses the reaction Hydrolyzes the link between N-acetylmuramoyl residues and L-amino acid residues in certain cell-wall glycopeptides.. Functionally, autolysins are cell wall hydrolases involved in some important biological processes such as cell separation, cell-wall turnover, competence for genetic transformation, formation of the flagella - in particular of its basal body - and sporulation. Has a high affinity for teichoic acid-endowed peptidoglycan. LytC is required for efficient swarming motility but not at the level of cell separation or flagellum biosynthesis. Rather, LytC appears to be important for proper flagellar function. The chain is N-acetylmuramoyl-L-alanine amidase LytC (lytC) from Bacillus subtilis (strain 168).